The sequence spans 421 residues: UDP-N-acetylglucosamine 1-carboxyvinyltransferase (421 aa).

22-23 (KN) provides a ligand contact to phosphoenolpyruvate. R93 serves as a coordination point for UDP-N-acetyl-alpha-D-glucosamine. Residue C117 is the Proton donor of the active site. C117 is modified (2-(S-cysteinyl)pyruvic acid O-phosphothioketal). Residues 122-126 (RPVDL), D308, and I330 each bind UDP-N-acetyl-alpha-D-glucosamine.

This sequence belongs to the EPSP synthase family. MurA subfamily.

The protein localises to the cytoplasm. It carries out the reaction phosphoenolpyruvate + UDP-N-acetyl-alpha-D-glucosamine = UDP-N-acetyl-3-O-(1-carboxyvinyl)-alpha-D-glucosamine + phosphate. It functions in the pathway cell wall biogenesis; peptidoglycan biosynthesis. Functionally, cell wall formation. Adds enolpyruvyl to UDP-N-acetylglucosamine. The polypeptide is UDP-N-acetylglucosamine 1-carboxyvinyltransferase (Pseudomonas fluorescens (strain SBW25)).